The following is a 153-amino-acid chain: Ribonuclease H (153 aa).

The region spanning 4–146 is the RNase H type-1 domain; sequence NNEIVEIYTD…CDRLATEQIK (143 aa). Mg(2+) is bound by residues aspartate 13, glutamate 51, aspartate 73, and aspartate 138.

Belongs to the RNase H family. In terms of assembly, monomer. The cofactor is Mg(2+).

It is found in the cytoplasm. It carries out the reaction Endonucleolytic cleavage to 5'-phosphomonoester.. Its function is as follows. Endonuclease that specifically degrades the RNA of RNA-DNA hybrids. The protein is Ribonuclease H of Caldanaerobacter subterraneus subsp. tengcongensis (strain DSM 15242 / JCM 11007 / NBRC 100824 / MB4) (Thermoanaerobacter tengcongensis).